A 352-amino-acid chain; its full sequence is Putative histone-lysine N-methyltransferase ASHH4 (352 aa).

The AWS domain occupies 60-109 (DHGIFCSCSLDPGSSTLCGSDCNCGILLSSCSSSCKCSSECTNKPFQQRH). In terms of domain architecture, SET spans 111-228 (KKMKLVQTEK…KGEQLTYDYQ (118 aa)). The region spanning 234–250 (ADQDCYCGAVCCRKKLG) is the Post-SET domain.

This sequence belongs to the class V-like SAM-binding methyltransferase superfamily. Histone-lysine methyltransferase family. SET2 subfamily.

Its subcellular location is the nucleus. The protein resides in the chromosome. It is found in the centromere. The enzyme catalyses L-lysyl-[histone] + S-adenosyl-L-methionine = N(6)-methyl-L-lysyl-[histone] + S-adenosyl-L-homocysteine + H(+). In terms of biological role, histone methyltransferase. The polypeptide is Putative histone-lysine N-methyltransferase ASHH4 (ASHH4) (Arabidopsis thaliana (Mouse-ear cress)).